An 84-amino-acid polypeptide reads, in one-letter code: ATP synthase subunit c (84 aa).

The next 2 membrane-spanning stretches (helical) occupy residues 9–29 and 54–74; these read IIGA…GFAI and IVAG…LLFI.

This sequence belongs to the ATPase C chain family. As to quaternary structure, F-type ATPases have 2 components, F(1) - the catalytic core - and F(0) - the membrane proton channel. F(1) has five subunits: alpha(3), beta(3), gamma(1), delta(1), epsilon(1). F(0) has three main subunits: a(1), b(2) and c(10-14). The alpha and beta chains form an alternating ring which encloses part of the gamma chain. F(1) is attached to F(0) by a central stalk formed by the gamma and epsilon chains, while a peripheral stalk is formed by the delta and b chains.

It localises to the cell inner membrane. F(1)F(0) ATP synthase produces ATP from ADP in the presence of a proton or sodium gradient. F-type ATPases consist of two structural domains, F(1) containing the extramembraneous catalytic core and F(0) containing the membrane proton channel, linked together by a central stalk and a peripheral stalk. During catalysis, ATP synthesis in the catalytic domain of F(1) is coupled via a rotary mechanism of the central stalk subunits to proton translocation. Its function is as follows. Key component of the F(0) channel; it plays a direct role in translocation across the membrane. A homomeric c-ring of between 10-14 subunits forms the central stalk rotor element with the F(1) delta and epsilon subunits. The protein is ATP synthase subunit c of Haemophilus influenzae (strain PittEE).